Reading from the N-terminus, the 282-residue chain is Transcription factor MYB1 (282 aa).

HTH myb-type domains lie at 9–61 and 62–116; these read KEGL…LNYL and RPDI…SKKV. 2 consecutive DNA-binding regions (H-T-H motif) follow at residues 37–61 and 89–112; these read WRDLPRRAGLKRCGKSCRLRWLNYL and WSLIAGRLPGRTDNEIKNYWNTYL. Positions 258-282 are disordered; that stretch reads EDDWKQNGGKDELMGGGNGGPSSVS. Basic and acidic residues predominate over residues 260–270; the sequence is DWKQNGGKDEL. A compositionally biased stretch (gly residues) spans 271–282; that stretch reads MGGGNGGPSSVS.

It localises to the nucleus. Functionally, transcription activator involved in the spatiotemporal regulation of flavonoid biosynthesis specifically in the corms of Montbretia. Activates the promoters of enzymes involved in the biosynthesis of the flavonol kaempferol and the flavonol-glycoside kaempferol-rhamnoside. This is Transcription factor MYB1 from Crocosmia x crocosmiiflora (Montbretia).